We begin with the raw amino-acid sequence, 404 residues long: Multidrug resistance protein MdtG (404 aa).

Helical transmembrane passes span 19-39, 56-76, 90-110, 113-133, 144-164, 171-191, 222-242, 254-274, 288-308, 317-337, and 376-396; these read LGCF…PLYV, LVFS…GGLA, LGMA…QFLI, ALLG…ATQV, TLST…GLLA, PVFF…FFFI, LFVT…ILTL, IAFI…LSAP, ILIV…FVQT, FLLG…LVYN, and AVFC…WNSL.

The protein belongs to the major facilitator superfamily. DHA1 family. MdtG (TC 2.A.1.2.20) subfamily.

The protein resides in the cell inner membrane. The polypeptide is Multidrug resistance protein MdtG (Salmonella choleraesuis (strain SC-B67)).